A 92-amino-acid polypeptide reads, in one-letter code: Kappa-scoloptoxin(15)-Ssd2a (92 aa).

The first 20 residues, 1-20 (MKMVYLGLFLIITSCVISSG), serve as a signal peptide directing secretion.

Contains 3 disulfide bonds. As to expression, expressed by the venom gland.

It is found in the secreted. Functionally, inhibits voltage-gated potassium channels (Kv) (IC(50)=about 10 nM), when tested on DRG neurons. This chain is Kappa-scoloptoxin(15)-Ssd2a, found in Scolopendra dehaani (Thai centipede).